The sequence spans 904 residues: Translation initiation factor IF-2 (904 aa).

Disordered stretches follow at residues 134–248 (RQRN…GSHV) and 267–315 (HLSA…FERP). A compositionally biased stretch (basic and acidic residues) spans 136–177 (RNLDEQQRLAESDRVRDEEIQRKRDEEQAAKDRAEAERKAAE). Low complexity-rich tracts occupy residues 178–230 (EAAA…STPA) and 285–303 (GRPGSSSSRRGNDNGRGSN). The 170-residue stretch at 403–572 (TRPPVVTIMG…SLQAEVLELK (170 aa)) folds into the tr-type G domain. The G1 stretch occupies residues 412–419 (GHVDHGKT). 412–419 (GHVDHGKT) lines the GTP pocket. The segment at 437-441 (GITQH) is G2. The segment at 458 to 461 (DTPG) is G3. GTP-binding positions include 458-462 (DTPGH) and 512-515 (NKID). Residues 512–515 (NKID) form a G4 region. The interval 548–550 (SAK) is G5.

The protein belongs to the TRAFAC class translation factor GTPase superfamily. Classic translation factor GTPase family. IF-2 subfamily.

Its subcellular location is the cytoplasm. Its function is as follows. One of the essential components for the initiation of protein synthesis. Protects formylmethionyl-tRNA from spontaneous hydrolysis and promotes its binding to the 30S ribosomal subunits. Also involved in the hydrolysis of GTP during the formation of the 70S ribosomal complex. The protein is Translation initiation factor IF-2 of Xanthomonas oryzae pv. oryzae (strain PXO99A).